Reading from the N-terminus, the 27-residue chain is Small ribosomal subunit protein bTHX (27 aa).

Residues 1-13 (MGKGDRRTRRGKI) are compositionally biased toward basic residues. The segment at 1–27 (MGKGDRRTRRGKIWRGTYGKYRPRKKK) is disordered.

Belongs to the bacterial ribosomal protein bTHX family. As to quaternary structure, part of the 30S ribosomal subunit.

Its function is as follows. Binds at the top of the head of the 30S subunit. It stabilizes a number of different RNA elements and thus is important for subunit structure. This is Small ribosomal subunit protein bTHX (rpsU) from Thermus aquaticus.